The primary structure comprises 203 residues: NAD(P)H dehydrogenase (quinone) (203 aa).

Residues Ile3 to Val194 form the Flavodoxin-like domain. FMN-binding positions include Ser9–Val14 and Ala82–Phe84. Tyr11 lines the NAD(+) pocket. Residue Trp102 participates in substrate binding. Residues Ser117–Gly123 and His138 contribute to the FMN site.

The protein belongs to the WrbA family. FMN is required as a cofactor.

The enzyme catalyses a quinone + NADH + H(+) = a quinol + NAD(+). It carries out the reaction a quinone + NADPH + H(+) = a quinol + NADP(+). The sequence is that of NAD(P)H dehydrogenase (quinone) from Syntrophus aciditrophicus (strain SB).